Consider the following 195-residue polypeptide: Ribonuclease HII (195 aa).

Residues 6-195 (SLIAGVDEVG…KSFISRLKKN (190 aa)) enclose the RNase H type-2 domain. Residues Asp12, Glu13, and Asp108 each coordinate a divalent metal cation.

It belongs to the RNase HII family. Mn(2+) is required as a cofactor. Requires Mg(2+) as cofactor.

The protein localises to the cytoplasm. The catalysed reaction is Endonucleolytic cleavage to 5'-phosphomonoester.. Its function is as follows. Endonuclease that specifically degrades the RNA of RNA-DNA hybrids. The chain is Ribonuclease HII from Prochlorococcus marinus (strain NATL2A).